A 123-amino-acid chain; its full sequence is MVRLIGVDLPRNKRIAYALTYIHGIGITSARKIIELAEISPETRTDDLTTEQTIALRDQLESIDLNLEGDLRCFNGLNIKRLNEINCHRGKRHRNNLPVRGQRTRTNARSRRGSKKTVTGKKK.

The tract at residues 90 to 123 is disordered; that stretch reads GKRHRNNLPVRGQRTRTNARSRRGSKKTVTGKKK. Positions 102–123 are enriched in basic residues; the sequence is QRTRTNARSRRGSKKTVTGKKK.

It belongs to the universal ribosomal protein uS13 family. As to quaternary structure, part of the 30S ribosomal subunit.

The protein localises to the plastid. It is found in the chloroplast. Functionally, located at the top of the head of the 30S subunit, it contacts several helices of the 16S rRNA. This Trieres chinensis (Marine centric diatom) protein is Small ribosomal subunit protein uS13c.